A 743-amino-acid chain; its full sequence is 1,4-alpha-glucan branching enzyme GlgB (743 aa).

Residue D416 is the Nucleophile of the active site. The active-site Proton donor is the E469.

The protein belongs to the glycosyl hydrolase 13 family. GlgB subfamily. In terms of assembly, monomer.

It catalyses the reaction Transfers a segment of a (1-&gt;4)-alpha-D-glucan chain to a primary hydroxy group in a similar glucan chain.. The protein operates within glycan biosynthesis; glycogen biosynthesis. Functionally, catalyzes the formation of the alpha-1,6-glucosidic linkages in glycogen by scission of a 1,4-alpha-linked oligosaccharide from growing alpha-1,4-glucan chains and the subsequent attachment of the oligosaccharide to the alpha-1,6 position. This is 1,4-alpha-glucan branching enzyme GlgB from Shewanella baltica (strain OS223).